Consider the following 661-residue polypeptide: Threonine--tRNA ligase (661 aa).

In terms of domain architecture, TGS spans 1–64 (MSHSVSLTFP…ADGKIEIVTR (64 aa)). The catalytic stretch occupies residues 245-547 (DHRRLGREMD…LLENYAGHMP (303 aa)). Zn(2+) is bound by residues C341, H392, and H524.

This sequence belongs to the class-II aminoacyl-tRNA synthetase family. In terms of assembly, homodimer. Requires Zn(2+) as cofactor.

The protein localises to the cytoplasm. The catalysed reaction is tRNA(Thr) + L-threonine + ATP = L-threonyl-tRNA(Thr) + AMP + diphosphate + H(+). In terms of biological role, catalyzes the attachment of threonine to tRNA(Thr) in a two-step reaction: L-threonine is first activated by ATP to form Thr-AMP and then transferred to the acceptor end of tRNA(Thr). Also edits incorrectly charged L-seryl-tRNA(Thr). The polypeptide is Threonine--tRNA ligase (Sinorhizobium fredii (strain NBRC 101917 / NGR234)).